The following is a 1141-amino-acid chain: Sterol regulatory element-binding protein 2 (1141 aa).

The transcriptional activation (acidic) stretch occupies residues 1-50 (MDDSGELGGLETMETLTELGDELTLGDIDEMLQFVSNQVGEFPDLFSEQL). Over 1 to 479 (MDDSGELGGL…PPVALGMVDR (479 aa)) the chain is Cytoplasmic. The segment at 48-144 (EQLCSSFPGS…PQPQPQPQTQ (97 aa)) is disordered. Low complexity predominate over residues 63–82 (SSGSSGSSSSSSNGRGSSSG). Over residues 88–97 (VQRSFTQVTL) the composition is skewed to polar residues. Over residues 98 to 110 (PSFSPSAASPQAP) the composition is skewed to low complexity. A compositionally biased stretch (polar residues) spans 114-126 (VKVSPTSVPTTPR). An interaction with LMNA region spans residues 237-491 (QQVPVLVQPQ…ILLCVLTFLC (255 aa)). Positions 330-380 (ERRTTHNIIEKRYRSSINDKIIELKDLVMGTDAKMHKSGVLRKAIDYIKYL) constitute a bHLH domain. The interval 380-401 (LQQVNHKLRQENMVLKLANQKN) is leucine-zipper. Lys-464 is covalently cross-linked (Glycyl lysine isopeptide (Lys-Gly) (interchain with G-Cter in SUMO2)). The chain crosses the membrane as a helical span at residues 480–500 (SRILLCVLTFLCLSFNPLTSL). Topologically, residues 501-533 (LQWGGAHDSDQHPHSGSGRSVLSFESGSGGWFD) are lumenal. Residues 534–554 (WMMPTLLLWLVNGVIVLSVFV) traverse the membrane as a helical segment. Residues 555 to 1139 (KLLVHGEPVI…VKLGGGTAIA (585 aa)) lie on the Cytoplasmic side of the membrane. Ser-855 and Ser-1098 each carry phosphoserine.

Belongs to the SREBP family. Forms a tight complex with SCAP, the SCAP-SREBP complex, in the endoplasmic reticulum membrane and the Golgi apparatus. Interacts with PAQR3; the interaction anchors the SCAP-SREBP complex to the Golgi apparatus in low cholesterol conditions. Interacts (via C-terminal domain) with RNF139. In terms of assembly, homodimer; efficient DNA binding of the soluble transcription factor fragment requires dimerization with another bHLH protein. Interacts with LMNA. Post-translationally, processed in the Golgi apparatus, releasing the protein from the membrane. At low cholesterol the SCAP-SREBP complex is recruited into COPII vesicles for export from the endoplasmic reticulum. In the Golgi, complex SREBPs are cleaved sequentially by site-1 (MBTPS1, S1P) and site-2 (MBTPS2, S2P) protease. The first cleavage by site-1 protease occurs within the luminal loop, the second cleavage by site-2 protease occurs within the first transmembrane domain, releasing the transcription factor from the Golgi membrane. Apoptosis triggers cleavage by the cysteine proteases caspase-3 and caspase-7. Cleavage and activation is induced by mediated cholesterol efflux. In terms of processing, phosphorylated by AMPK, leading to suppress protein processing and nuclear translocation, and repress target gene expression. SCAP-free SREBF2 is ubiquitinated by the BCR(ARMC5) complex, leading to its degradation. Post-translationally, ubiquitinated; the nuclear form has a rapid turnover and is rapidly ubiquitinated and degraded by the proteasome in the nucleus. Ubiquitously expressed in adult and fetal tissues.

Its subcellular location is the endoplasmic reticulum membrane. The protein resides in the golgi apparatus membrane. It is found in the cytoplasmic vesicle. It localises to the COPII-coated vesicle membrane. The protein localises to the nucleus. With respect to regulation, activation by cleavage is down-regulated upon activation of SIRT3-dependent PRKAA1/AMPK-alpha signaling cascade which leads to inhibition of ATP-consuming lipogenesis to restore cellular energy balance. Precursor of the transcription factor form (Processed sterol regulatory element-binding protein 2), which is embedded in the endoplasmic reticulum membrane. Low sterol concentrations promote processing of this form, releasing the transcription factor form that translocates into the nucleus and activates transcription of genes involved in cholesterol biosynthesis. In terms of biological role, key transcription factor that regulates expression of genes involved in cholesterol biosynthesis. Binds to the sterol regulatory element 1 (SRE-1) (5'-ATCACCCCAC-3'). Has dual sequence specificity binding to both an E-box motif (5'-ATCACGTGA-3') and to SRE-1 (5'-ATCACCCCAC-3'). Regulates transcription of genes related to cholesterol synthesis pathway. The sequence is that of Sterol regulatory element-binding protein 2 from Homo sapiens (Human).